A 71-amino-acid chain; its full sequence is uncharacterized protein (71 aa).

Positions Glu-23–Ile-71 are disordered. Positions Gly-52–Ile-71 are enriched in basic and acidic residues.

This is an uncharacterized protein from Caenorhabditis elegans.